The primary structure comprises 158 residues: Transcription elongation factor GreA (158 aa).

Positions 45-73 (AEYHAAREQQSFIEGRIKQLESELSHAEI) form a coiled coil.

This sequence belongs to the GreA/GreB family.

Its function is as follows. Necessary for efficient RNA polymerase transcription elongation past template-encoded arresting sites. The arresting sites in DNA have the property of trapping a certain fraction of elongating RNA polymerases that pass through, resulting in locked ternary complexes. Cleavage of the nascent transcript by cleavage factors such as GreA or GreB allows the resumption of elongation from the new 3'terminus. GreA releases sequences of 2 to 3 nucleotides. The sequence is that of Transcription elongation factor GreA from Xanthomonas axonopodis pv. citri (strain 306).